Consider the following 382-residue polypeptide: Dual-specificity RNA methyltransferase RlmN (382 aa).

Glu-94 acts as the Proton acceptor in catalysis. One can recognise a Radical SAM core domain in the interval 100-336; the sequence is EANRGTLCVS…NTITRKTRGD (237 aa). Cys-107 and Cys-342 form a disulfide bridge. [4Fe-4S] cluster is bound by residues Cys-114, Cys-118, and Cys-121. Residues 168-169, Ser-200, 222-224, and Asn-299 contribute to the S-adenosyl-L-methionine site; these read GE and SLH. The active-site S-methylcysteine intermediate is Cys-342.

This sequence belongs to the radical SAM superfamily. RlmN family. Requires [4Fe-4S] cluster as cofactor.

The protein resides in the cytoplasm. The enzyme catalyses adenosine(2503) in 23S rRNA + 2 reduced [2Fe-2S]-[ferredoxin] + 2 S-adenosyl-L-methionine = 2-methyladenosine(2503) in 23S rRNA + 5'-deoxyadenosine + L-methionine + 2 oxidized [2Fe-2S]-[ferredoxin] + S-adenosyl-L-homocysteine. It catalyses the reaction adenosine(37) in tRNA + 2 reduced [2Fe-2S]-[ferredoxin] + 2 S-adenosyl-L-methionine = 2-methyladenosine(37) in tRNA + 5'-deoxyadenosine + L-methionine + 2 oxidized [2Fe-2S]-[ferredoxin] + S-adenosyl-L-homocysteine. Its function is as follows. Specifically methylates position 2 of adenine 2503 in 23S rRNA and position 2 of adenine 37 in tRNAs. m2A2503 modification seems to play a crucial role in the proofreading step occurring at the peptidyl transferase center and thus would serve to optimize ribosomal fidelity. This is Dual-specificity RNA methyltransferase RlmN from Legionella pneumophila (strain Lens).